We begin with the raw amino-acid sequence, 398 residues long: Small ribosomal subunit protein mS29 (398 aa).

A mitochondrion-targeting transit peptide spans 1 to 21; that stretch reads MMLKGITRLISRIHKLDPGRF. The disordered stretch occupies residues 39-67; it reads QVPVESPRAISRTNENDPAKHGDQHEGQH. A compositionally biased stretch (basic and acidic residues) spans 52-66; that stretch reads NENDPAKHGDQHEGQ. Residues Met-100 and 128-135 each bind GTP; that span reads GEKGTGKT. An N6-acetyllysine mark is found at Lys-175 and Lys-207.

It belongs to the mitochondrion-specific ribosomal protein mS29 family. Component of the mitochondrial small ribosomal subunit (mt-SSU). Mature mammalian 55S mitochondrial ribosomes consist of a small (28S) and a large (39S) subunit. The 28S small subunit contains a 12S ribosomal RNA (12S mt-rRNA) and 30 different proteins. The 39S large subunit contains a 16S rRNA (16S mt-rRNA), a copy of mitochondrial valine transfer RNA (mt-tRNA(Val)), which plays an integral structural role, and 52 different proteins. Interacts with DELE1. Interacts with NOA1. In terms of tissue distribution, ubiquitous.

It is found in the mitochondrion. The catalysed reaction is GTP + H2O = GDP + phosphate + H(+). Functionally, as a component of the mitochondrial small ribosomal subunit, it plays a role in the translation of mitochondrial mRNAs. Involved in mediating interferon-gamma-induced cell death. Displays GTPase activity in vitro. In Homo sapiens (Human), this protein is Small ribosomal subunit protein mS29.